We begin with the raw amino-acid sequence, 379 residues long: Alanine racemase (379 aa).

K37 (proton acceptor; specific for D-alanine) is an active-site residue. Position 37 is an N6-(pyridoxal phosphate)lysine (K37). Position 137 (R137) interacts with substrate. Y269 serves as the catalytic Proton acceptor; specific for L-alanine. Residue M317 coordinates substrate.

This sequence belongs to the alanine racemase family. Requires pyridoxal 5'-phosphate as cofactor.

The catalysed reaction is L-alanine = D-alanine. Its pathway is amino-acid biosynthesis; D-alanine biosynthesis; D-alanine from L-alanine: step 1/1. Its function is as follows. Catalyzes the interconversion of L-alanine and D-alanine. May also act on other amino acids. In Geobacter sp. (strain M21), this protein is Alanine racemase (alr).